Reading from the N-terminus, the 388-residue chain is Protein TsgA homolog (388 aa).

The next 12 helical transmembrane spans lie at 11 to 31 (WISF…GMIM), 50 to 70 (TFLN…IEII), 77 to 97 (IFSF…NSIF), 101 to 121 (INMF…TFII), 133 to 153 (LLLL…IVTA), 160 to 180 (IIWY…FLLT), 206 to 226 (VFLL…FISW), 244 to 264 (SLVS…SFII), 268 to 288 (NLYR…YCFI), 298 to 318 (YIII…ITLA), 332 to 352 (LILL…SPIV), and 360 to 380 (TLIS…LIYF).

The protein belongs to the major facilitator superfamily. TsgA family.

The protein localises to the cell membrane. This is Protein TsgA homolog from Buchnera aphidicola subsp. Acyrthosiphon pisum (strain 5A).